A 94-amino-acid chain; its full sequence is Large ribosomal subunit protein uL23 (94 aa).

This sequence belongs to the universal ribosomal protein uL23 family. Part of the 50S ribosomal subunit. Contacts protein L29, and trigger factor when it is bound to the ribosome.

One of the early assembly proteins it binds 23S rRNA. One of the proteins that surrounds the polypeptide exit tunnel on the outside of the ribosome. Forms the main docking site for trigger factor binding to the ribosome. This chain is Large ribosomal subunit protein uL23, found in Lysinibacillus sphaericus (strain C3-41).